Here is a 609-residue protein sequence, read N- to C-terminus: Spore-specific protein YSW1 (609 aa).

Residues 1 to 24 are disordered; that stretch reads MSSLADTVEGSEAKRGRFSNNALT. Phosphoserine occurs at positions 159 and 160. Residues 162–225 form a disordered region; the sequence is DENESHFTDA…DDEFSPATPP (64 aa). The segment covering 169–179 has biased composition (polar residues); it reads TDANSHVMQSK. Basic and acidic residues predominate over residues 200–209; it reads LKKEYEKSFE. Acidic residues predominate over residues 210–219; sequence EYSDDSDDEF.

The polypeptide is Spore-specific protein YSW1 (YSW1) (Saccharomyces cerevisiae (strain ATCC 204508 / S288c) (Baker's yeast)).